The sequence spans 122 residues: Large ribosomal subunit protein uL14 (122 aa).

Belongs to the universal ribosomal protein uL14 family. Part of the 50S ribosomal subunit. Forms a cluster with proteins L3 and L19. In the 70S ribosome, L14 and L19 interact and together make contacts with the 16S rRNA in bridges B5 and B8.

Binds to 23S rRNA. Forms part of two intersubunit bridges in the 70S ribosome. The protein is Large ribosomal subunit protein uL14 of Chlorobaculum tepidum (strain ATCC 49652 / DSM 12025 / NBRC 103806 / TLS) (Chlorobium tepidum).